Here is a 391-residue protein sequence, read N- to C-terminus: Argininosuccinate synthase (391 aa).

Position 6 to 14 (alanine 6 to threonine 14) interacts with ATP. An L-citrulline-binding site is contributed by tyrosine 84. Glycine 114 contacts ATP. Residues threonine 116, asparagine 120, and aspartate 121 each coordinate L-aspartate. Asparagine 120 is a binding site for L-citrulline. Positions 124, 171, 180, 253, and 265 each coordinate L-citrulline.

The protein belongs to the argininosuccinate synthase family. Type 1 subfamily. Homotetramer.

The protein resides in the cytoplasm. The enzyme catalyses L-citrulline + L-aspartate + ATP = 2-(N(omega)-L-arginino)succinate + AMP + diphosphate + H(+). It participates in amino-acid biosynthesis; L-arginine biosynthesis; L-arginine from L-ornithine and carbamoyl phosphate: step 2/3. The chain is Argininosuccinate synthase from Sulfolobus acidocaldarius (strain ATCC 33909 / DSM 639 / JCM 8929 / NBRC 15157 / NCIMB 11770).